We begin with the raw amino-acid sequence, 284 residues long: Tropomyosin alpha-1 chain (284 aa).

The disordered stretch occupies residues 1-38; the sequence is MDAIKKKMQMLKLDKENALDRAEQAEADKKGAEDKSKQ. Residues 1-284 are a coiled coil; sequence MDAIKKKMQM…DHALNDMTSI (284 aa). The segment covering 12–38 has biased composition (basic and acidic residues); sequence KLDKENALDRAEQAEADKKGAEDKSKQ.

It belongs to the tropomyosin family. As to quaternary structure, homodimer. Heterodimer of an alpha (TPM1, TPM3 or TPM4) and a beta (TPM2) chain.

It localises to the cytoplasm. The protein resides in the cytoskeleton. Its function is as follows. Binds to actin filaments in muscle and non-muscle cells. Plays a central role, in association with the troponin complex, in the calcium dependent regulation of vertebrate striated muscle contraction. Smooth muscle contraction is regulated by interaction with caldesmon. In non-muscle cells is implicated in stabilizing cytoskeleton actin filaments. The polypeptide is Tropomyosin alpha-1 chain (tpm1) (Xenopus laevis (African clawed frog)).